A 74-amino-acid chain; its full sequence is Translation initiation factor IF-1, chloroplastic (74 aa).

Residues 1 to 72 (MERQNLIEME…TKGRITYRLR (72 aa)) enclose the S1-like domain.

It belongs to the IF-1 family. Component of the 30S ribosomal translation pre-initiation complex which assembles on the 30S ribosome in the order IF-2 and IF-3, IF-1 and N-formylmethionyl-tRNA(fMet); mRNA recruitment can occur at any time during PIC assembly.

It localises to the plastid. Its subcellular location is the chloroplast. In terms of biological role, one of the essential components for the initiation of protein synthesis. Stabilizes the binding of IF-2 and IF-3 on the 30S subunit to which N-formylmethionyl-tRNA(fMet) subsequently binds. Helps modulate mRNA selection, yielding the 30S pre-initiation complex (PIC). Upon addition of the 50S ribosomal subunit IF-1, IF-2 and IF-3 are released leaving the mature 70S translation initiation complex. The protein is Translation initiation factor IF-1, chloroplastic of Mesostigma viride (Green alga).